Reading from the N-terminus, the 296-residue chain is Ethanolamine ammonia-lyase small subunit (296 aa).

2 residues coordinate adenosylcob(III)alamin: Val-209 and Glu-230.

This sequence belongs to the EutC family. As to quaternary structure, the basic unit is a heterodimer which dimerizes to form tetramers. The heterotetramers trimerize; 6 large subunits form a core ring with 6 small subunits projecting outwards. The cofactor is adenosylcob(III)alamin.

Its subcellular location is the bacterial microcompartment. The catalysed reaction is ethanolamine = acetaldehyde + NH4(+). The protein operates within amine and polyamine degradation; ethanolamine degradation. Functionally, catalyzes the deamination of various vicinal amino-alcohols to oxo compounds. Allows this organism to utilize ethanolamine as the sole source of nitrogen and carbon in the presence of external vitamin B12. The polypeptide is Ethanolamine ammonia-lyase small subunit (Lachnoclostridium phytofermentans (strain ATCC 700394 / DSM 18823 / ISDg) (Clostridium phytofermentans)).